Reading from the N-terminus, the 376-residue chain is N-acetyldiaminopimelate deacetylase (376 aa).

Residue aspartate 69 is part of the active site. The Proton acceptor role is filled by glutamate 128.

Belongs to the peptidase M20A family. N-acetyldiaminopimelate deacetylase subfamily.

It carries out the reaction N-acetyl-(2S,6S)-2,6-diaminopimelate + H2O = (2S,6S)-2,6-diaminopimelate + acetate. Its pathway is amino-acid biosynthesis; L-lysine biosynthesis via DAP pathway; LL-2,6-diaminopimelate from (S)-tetrahydrodipicolinate (acetylase route): step 3/3. In terms of biological role, catalyzes the conversion of N-acetyl-diaminopimelate to diaminopimelate and acetate. This chain is N-acetyldiaminopimelate deacetylase, found in Bacillus mycoides (strain KBAB4) (Bacillus weihenstephanensis).